We begin with the raw amino-acid sequence, 64 residues long: Small ribosomal subunit protein bS21 (64 aa).

Belongs to the bacterial ribosomal protein bS21 family.

The chain is Small ribosomal subunit protein bS21 from Pelagibacter ubique (strain HTCC1062).